Here is a 388-residue protein sequence, read N- to C-terminus: (S)-8-oxocitronellyl enol synthase ISY1 (388 aa).

Residues 35 to 37 (TGI), 63 to 64 (RR), 81 to 82 (DV), 105 to 106 (TW), and Q143 each bind NADP(+). Catalysis depends on residues K147 and Y178. Residues Y178, I205, and 212-214 (SMM) contribute to the NADP(+) site.

The protein belongs to the short-chain dehydrogenases/reductases (SDR) family.

The catalysed reaction is (S)-8-oxocitronellyl enol + NADP(+) = (6E)-8-oxogeranial + NADPH + H(+). The enzyme catalyses (S)-8-oxocitronellyl enol + NAD(+) = (6E)-8-oxogeranial + NADH + H(+). Functionally, iridoid synthase that catalyzes the first step in generation of the iridoid ring scaffold using the linear monoterpene (6E)-8-oxogeranial as substrate. Iridoids comprise a large family of distinctive bicyclic monoterpenes that possess a wide range of pharmacological activities, including anticancer, anti-inflammatory, antifungal and antibacterial activities. Catalyzes the conversion of the linear monoterpene (6E)-8-oxogeranial to (S)-8-oxocitronellyl enol, a precursor of nepetalactones, which are metabolites that are both insect-repellent and have euphoric effect in cats. The polypeptide is (S)-8-oxocitronellyl enol synthase ISY1 (Nepeta racemosa (Catmint)).